The primary structure comprises 235 residues: Orotidine 5'-phosphate decarboxylase (235 aa).

Substrate is bound by residues aspartate 12, lysine 34, 61–70 (DMKLLDIDNT), threonine 116, arginine 177, glutamine 186, and arginine 207. Residue lysine 63 is the Proton donor of the active site.

It belongs to the OMP decarboxylase family. Type 1 subfamily. As to quaternary structure, homodimer.

It catalyses the reaction orotidine 5'-phosphate + H(+) = UMP + CO2. The protein operates within pyrimidine metabolism; UMP biosynthesis via de novo pathway; UMP from orotate: step 2/2. In terms of biological role, catalyzes the decarboxylation of orotidine 5'-monophosphate (OMP) to uridine 5'-monophosphate (UMP). The polypeptide is Orotidine 5'-phosphate decarboxylase (Agrobacterium fabrum (strain C58 / ATCC 33970) (Agrobacterium tumefaciens (strain C58))).